The sequence spans 329 residues: METLFSGIQPSGIPTIGNYIGALKQFVDVQNDYDCYFCIVDQHAITMPQDRLKLRKQTRQLAAIYLASGIDPDKATLFIQSEVPAHVQAGWMLTTIASVGELERMTQYKDKAQKAVEGIPAGLLTYPPLMAADIVLYNTNIVPVGDDQKQHIELTRNLVDRFNSRYNDVLVKPEIRMPKVGGRVMSLQDPTRKMSKSDDNAKNFISLLDEPNVAAKKIKSAVTDSDGIIKFDRDNKPGITNLISIYAGLTDMPIKDIEAKYEGEGYGKFKGDLAEIVKAFLVEFQEKYESFYNSDKLDDILDQGRDKAHKASFKTVKKMEKAMGLGRKR.

ATP is bound by residues 9–11 and 17–18; these read QPS and GN. The short motif at 10-18 is the 'HIGH' region element; that stretch reads PSGIPTIGN. Asp133 serves as a coordination point for L-tryptophan. ATP-binding positions include 145 to 147, Val184, and 193 to 197; these read GDD and KMSKS. The short motif at 193–197 is the 'KMSKS' region element; sequence KMSKS.

The protein belongs to the class-I aminoacyl-tRNA synthetase family. Homodimer.

Its subcellular location is the cytoplasm. The enzyme catalyses tRNA(Trp) + L-tryptophan + ATP = L-tryptophyl-tRNA(Trp) + AMP + diphosphate + H(+). Catalyzes the attachment of tryptophan to tRNA(Trp). The chain is Tryptophan--tRNA ligase from Staphylococcus aureus (strain MRSA252).